A 287-amino-acid polypeptide reads, in one-letter code: Ribosomal RNA small subunit methyltransferase I (287 aa).

This sequence belongs to the methyltransferase superfamily. RsmI family.

The protein resides in the cytoplasm. It catalyses the reaction cytidine(1402) in 16S rRNA + S-adenosyl-L-methionine = 2'-O-methylcytidine(1402) in 16S rRNA + S-adenosyl-L-homocysteine + H(+). Catalyzes the 2'-O-methylation of the ribose of cytidine 1402 (C1402) in 16S rRNA. The protein is Ribosomal RNA small subunit methyltransferase I of Streptococcus pyogenes serotype M6 (strain ATCC BAA-946 / MGAS10394).